Consider the following 372-residue polypeptide: Fatty acid 2-hydroxylase (372 aa).

The Cytochrome b5 heme-binding domain occupies 8–86 (AASFTPAEVQ…LEQYYVGELR (79 aa)). His43 and His69 together coordinate heme. Transmembrane regions (helical) follow at residues 168 to 188 (VWYS…WSYY) and 213 to 233 (SVFI…EYVI). The 143-residue stretch at 219–361 (FVLGMLFWTF…TKLWDYFFHT (143 aa)) folds into the Fatty acid hydroxylase domain. Zn(2+) contacts are provided by His234, His239, His257, His260, and His261. Transmembrane regions (helical) follow at residues 268–288 (SRLV…YVFL) and 290–310 (LILP…GYVL). Residues His315, His319, His336, His339, and His340 each contribute to the Zn(2+) site.

Belongs to the sterol desaturase family. SCS7 subfamily. Zn(2+) is required as a cofactor. As to expression, expressed in brain (at protein level). Detected in cerebellum and forebrain. Expression in the white matter is mainly restricted in oligodendrocytes. Expressed in stomach, kidney, skin and testis. Expressed in sebaceous gland.

It localises to the endoplasmic reticulum membrane. Its subcellular location is the microsome membrane. It carries out the reaction a 1,2-saturated fatty acid + 2 Fe(II)-[cytochrome b5] + O2 + 2 H(+) = a (R)-2-hydroxy fatty acid + 2 Fe(III)-[cytochrome b5] + H2O. It catalyses the reaction hexadecanoate + 2 Fe(II)-[cytochrome b5] + O2 + 2 H(+) = (R)-2-hydroxyhexadecanoate + 2 Fe(III)-[cytochrome b5] + H2O. The catalysed reaction is octadecanoate + 2 Fe(II)-[cytochrome b5] + O2 + 2 H(+) = (R)-2-hydroxyoctadecanoate + 2 Fe(III)-[cytochrome b5] + H2O. The enzyme catalyses docosanoate + 2 Fe(II)-[cytochrome b5] + O2 + 2 H(+) = 2-hydroxydocosanoate + 2 Fe(III)-[cytochrome b5] + H2O. It carries out the reaction tetracosanoate + 2 Fe(II)-[cytochrome b5] + O2 + 2 H(+) = (R)-2-hydroxytetracosanoate + 2 Fe(III)-[cytochrome b5] + H2O. Its pathway is sphingolipid metabolism; galactosylceramide biosynthesis. The protein operates within lipid metabolism; fatty acid metabolism. Functionally, catalyzes the hydroxylation of free fatty acids at the C-2 position to produce 2-hydroxy fatty acids, which are building blocks of sphingolipids and glycosphingolipids common in neural tissue and epidermis. FA2H is stereospecific for the production of (R)-2-hydroxy fatty acids. Plays an essential role in the synthesis of galactosphingolipids of the myelin sheath. Responsible for the synthesis of sphingolipids and glycosphingolipids involved in the formation of epidermal lamellar bodies critical for skin permeability barrier. Participates in the synthesis of glycosphingolipids and a fraction of type II wax diesters in sebaceous gland, specifically regulating hair follicle homeostasis. Involved in the synthesis of sphingolipids of plasma membrane rafts, controlling lipid raft mobility and trafficking of raft-associated proteins. The sequence is that of Fatty acid 2-hydroxylase from Mus musculus (Mouse).